Here is a 246-residue protein sequence, read N- to C-terminus: Trypsin V-A (246 aa).

Residues 1 to 15 (MKICIFFTLLGTVAA) form the signal peptide. The propeptide at 16 to 24 (FPTEDNDDR) is activation peptide. The 220-residue stretch at 25–244 (IVGGYTCQEH…YLNWIHQTIA (220 aa)) folds into the Peptidase S1 domain. Cystine bridges form between Cys31/Cys160, Cys49/Cys65, Cys133/Cys233, Cys140/Cys206, Cys171/Cys185, and Cys196/Cys220. His64 (charge relay system) is an active-site residue. 3 residues coordinate Ca(2+): Glu76, Asn78, and Glu86. Residue Asp108 is the Charge relay system of the active site. Ser200 serves as the catalytic Charge relay system.

It belongs to the peptidase S1 family. Requires Ca(2+) as cofactor.

The protein resides in the secreted. The protein localises to the extracellular space. The catalysed reaction is Preferential cleavage: Arg-|-Xaa, Lys-|-Xaa.. In Rattus norvegicus (Rat), this protein is Trypsin V-A.